We begin with the raw amino-acid sequence, 120 residues long: Cytochrome c2 iso-1 (120 aa).

Gln1 is modified (pyrrolidone carboxylic acid). Positions 15, 18, 19, and 98 each coordinate heme c.

Belongs to the cytochrome c family. In terms of processing, binds 1 heme c group covalently per subunit.

Its function is as follows. Cytochrome c2 is found mainly in purple, non-sulfur, photosynthetic bacteria where it functions as the electron donor to the oxidized bacteriochlorophyll in the photophosphorylation pathway. However, it may also have a role in the respiratory chain and is found in some non-photosynthetic bacteria. The protein is Cytochrome c2 iso-1 of Rhodospirillum centenum (Rhodocista centenaria).